The following is a 130-amino-acid chain: Histone H2A type 1-F (130 aa).

Residues 1-22 are disordered; the sequence is MSGRGKQGGKARAKAKTRSSRA. The residue at position 2 (Ser2) is a Phosphoserine; by RPS6KA5. Arg4 is modified (citrulline; alternate). Arg4 is subject to Symmetric dimethylarginine; by PRMT5; alternate. The residue at position 6 (Lys6) is an N6-(2-hydroxyisobutyryl)lysine; alternate. An N6-(beta-hydroxybutyryl)lysine; alternate modification is found at Lys6. Basic residues predominate over residues 7-19; that stretch reads QGGKARAKAKTRS. Lys10 is modified (N6-(2-hydroxyisobutyryl)lysine). Position 10 is an N6-lactoyllysine; alternate (Lys10). The residue at position 37 (Lys37) is an N6-(2-hydroxyisobutyryl)lysine; alternate. Position 37 is an N6-(beta-hydroxybutyryl)lysine; alternate (Lys37). Lys37 carries the post-translational modification N6-crotonyllysine; alternate. 3 positions are modified to N6-(2-hydroxyisobutyryl)lysine: Lys75, Lys76, and Lys96. Lys96 is modified (N6-glutaryllysine; alternate). Gln105 carries the N5-methylglutamine modification. Lys119 bears the N6-(2-hydroxyisobutyryl)lysine; alternate mark. Residues Lys119 and Lys120 each carry the N6-crotonyllysine; alternate modification. N6-glutaryllysine; alternate occurs at positions 119 and 120. At Lys120 the chain carries N6-(beta-hydroxybutyryl)lysine; alternate. Lys120 is covalently cross-linked (Glycyl lysine isopeptide (Lys-Gly) (interchain with G-Cter in ubiquitin); alternate). Thr121 carries the phosphothreonine; by DCAF1 modification. Lys126 is subject to N6-(beta-hydroxybutyryl)lysine; alternate. The residue at position 126 (Lys126) is an N6-crotonyllysine; alternate. Position 126 is an N6-glutaryllysine; alternate (Lys126).

It belongs to the histone H2A family. The nucleosome is a histone octamer containing two molecules each of H2A, H2B, H3 and H4 assembled in one H3-H4 heterotetramer and two H2A-H2B heterodimers. The octamer wraps approximately 147 bp of DNA. Deiminated on Arg-4 in granulocytes upon calcium entry. In terms of processing, monoubiquitination of Lys-120 (H2AK119Ub) by RING1, TRIM37 and RNF2/RING2 complex gives a specific tag for epigenetic transcriptional repression and participates in X chromosome inactivation of female mammals. It is involved in the initiation of both imprinted and random X inactivation. Ubiquitinated H2A is enriched in inactive X chromosome chromatin. Ubiquitination of H2A functions downstream of methylation of 'Lys-27' of histone H3 (H3K27me). H2AK119Ub by RNF2/RING2 can also be induced by ultraviolet and may be involved in DNA repair. Following DNA double-strand breaks (DSBs), it is ubiquitinated through 'Lys-63' linkage of ubiquitin moieties by the E2 ligase UBE2N and the E3 ligases RNF8 and RNF168, leading to the recruitment of repair proteins to sites of DNA damage. Ubiquitination at Lys-14 and Lys-16 (H2AK13Ub and H2AK15Ub, respectively) in response to DNA damage is initiated by RNF168 that mediates monoubiquitination at these 2 sites, and 'Lys-63'-linked ubiquitin are then conjugated to monoubiquitin; RNF8 is able to extend 'Lys-63'-linked ubiquitin chains in vitro. H2AK119Ub and ionizing radiation-induced 'Lys-63'-linked ubiquitination (H2AK13Ub and H2AK15Ub) are distinct events. Post-translationally, phosphorylation on Ser-2 (H2AS1ph) is enhanced during mitosis. Phosphorylation on Ser-2 by RPS6KA5/MSK1 directly represses transcription. Acetylation of H3 inhibits Ser-2 phosphorylation by RPS6KA5/MSK1. Phosphorylation at Thr-121 (H2AT120ph) by DCAF1 is present in the regulatory region of many tumor suppresor genes and down-regulates their transcription. Symmetric dimethylation on Arg-4 by the PRDM1/PRMT5 complex may play a crucial role in the germ-cell lineage. In terms of processing, glutamine methylation at Gln-105 (H2AQ104me) by FBL is specifically dedicated to polymerase I. It is present at 35S ribosomal DNA locus and impairs binding of the FACT complex. Post-translationally, crotonylation (Kcr) is specifically present in male germ cells and marks testis-specific genes in post-meiotic cells, including X-linked genes that escape sex chromosome inactivation in haploid cells. Crotonylation marks active promoters and enhancers and confers resistance to transcriptional repressors. It is also associated with post-meiotically activated genes on autosomes. Hydroxybutyrylation of histones is induced by starvation. In terms of processing, lactylated in macrophages by EP300/P300 by using lactoyl-CoA directly derived from endogenous or exogenous lactate, leading to stimulates gene transcription.

It localises to the nucleus. Its subcellular location is the chromosome. Functionally, core component of nucleosome. Nucleosomes wrap and compact DNA into chromatin, limiting DNA accessibility to the cellular machineries which require DNA as a template. Histones thereby play a central role in transcription regulation, DNA repair, DNA replication and chromosomal stability. DNA accessibility is regulated via a complex set of post-translational modifications of histones, also called histone code, and nucleosome remodeling. This Mus musculus (Mouse) protein is Histone H2A type 1-F (Hist1h2af).